The following is a 381-amino-acid chain: Queuine tRNA-ribosyltransferase (381 aa).

The active-site Proton acceptor is aspartate 89. Substrate-binding positions include aspartate 89–phenylalanine 93, aspartate 143, glutamine 187, and glycine 214. An RNA binding region spans residues glycine 245 to aspartate 251. Aspartate 264 serves as the catalytic Nucleophile. Positions threonine 269–arginine 273 are RNA binding; important for wobble base 34 recognition. Residues cysteine 302, cysteine 304, cysteine 307, and histidine 333 each contribute to the Zn(2+) site.

It belongs to the queuine tRNA-ribosyltransferase family. Homodimer. Within each dimer, one monomer is responsible for RNA recognition and catalysis, while the other monomer binds to the replacement base PreQ1. Requires Zn(2+) as cofactor.

The enzyme catalyses 7-aminomethyl-7-carbaguanine + guanosine(34) in tRNA = 7-aminomethyl-7-carbaguanosine(34) in tRNA + guanine. It participates in tRNA modification; tRNA-queuosine biosynthesis. Its function is as follows. Catalyzes the base-exchange of a guanine (G) residue with the queuine precursor 7-aminomethyl-7-deazaguanine (PreQ1) at position 34 (anticodon wobble position) in tRNAs with GU(N) anticodons (tRNA-Asp, -Asn, -His and -Tyr). Catalysis occurs through a double-displacement mechanism. The nucleophile active site attacks the C1' of nucleotide 34 to detach the guanine base from the RNA, forming a covalent enzyme-RNA intermediate. The proton acceptor active site deprotonates the incoming PreQ1, allowing a nucleophilic attack on the C1' of the ribose to form the product. After dissociation, two additional enzymatic reactions on the tRNA convert PreQ1 to queuine (Q), resulting in the hypermodified nucleoside queuosine (7-(((4,5-cis-dihydroxy-2-cyclopenten-1-yl)amino)methyl)-7-deazaguanosine). The polypeptide is Queuine tRNA-ribosyltransferase (Pectobacterium atrosepticum (strain SCRI 1043 / ATCC BAA-672) (Erwinia carotovora subsp. atroseptica)).